The following is a 95-amino-acid chain: Small ribosomal subunit protein bS6 (95 aa).

It belongs to the bacterial ribosomal protein bS6 family.

Its function is as follows. Binds together with bS18 to 16S ribosomal RNA. This Exiguobacterium sp. (strain ATCC BAA-1283 / AT1b) protein is Small ribosomal subunit protein bS6.